The primary structure comprises 262 residues: Phosphomannomutase 1 (262 aa).

N-acetylalanine is present on Ala2. Asp19 serves as the catalytic Nucleophile. The Mg(2+) site is built by Asp19 and Asp21. Catalysis depends on Asp21, which acts as the Proton donor/acceptor. Arg28, Arg132, Arg143, Arg150, Met186, Ser188, and Asp190 together coordinate alpha-D-mannose 1-phosphate. Residues Asn218, Tyr230, Asp232, and Thr235 each contribute to the Mg(2+) site. Phosphoserine is present on Ser242.

Belongs to the eukaryotic PMM family. Homodimer. Mg(2+) serves as cofactor. As to expression, present in brain, where it is restricted to neuronal cell bodies. Present at lower levels in pancreas, liver, lung, gonads, uterus, adrenal glands and pituitary (at protein level). Undetectable in intestine.

It localises to the cytoplasm. It catalyses the reaction alpha-D-mannose 1-phosphate = D-mannose 6-phosphate. It participates in nucleotide-sugar biosynthesis; GDP-alpha-D-mannose biosynthesis; alpha-D-mannose 1-phosphate from D-fructose 6-phosphate: step 2/2. Its activity is regulated as follows. IMP, a metabolite whose concentration is elevated in anoxia, inhibits phosphomannomutase and phosphoglucomutase activities and strongly enhances glucose-1,6-bisphosphatase activity. Involved in the synthesis of the GDP-mannose and dolichol-phosphate-mannose required for a number of critical mannosyl transfer reactions. In addition, may be responsible for the degradation of glucose-1,6-bisphosphate in ischemic brain. The polypeptide is Phosphomannomutase 1 (Pmm1) (Mus musculus (Mouse)).